A 526-amino-acid polypeptide reads, in one-letter code: Spermatogenesis-associated protein 7 homolog (526 aa).

The segment at 203–240 (DFSDQRMEAETQTELSSFNSELGTAEKKSSKDSDVSIK) is disordered. Polar residues predominate over residues 212–224 (ETQTELSSFNSEL). A compositionally biased stretch (basic and acidic residues) spans 226–237 (TAEKKSSKDSDV).

Found in a complex with CFAP410, NEK1 and SPATA7. Interacts with NEK1. Interacts with RPGRIP1. Interacts with RPGR. Interacts with NPHP4. Interacts with NPHP1. Interacts with AHI1. In terms of tissue distribution, in early prophase of primary spermatocytes.

Its subcellular location is the cytoplasm. The protein localises to the cytoskeleton. It localises to the cilium axoneme. It is found in the cilium basal body. The protein resides in the cell projection. Its subcellular location is the cilium. The protein localises to the photoreceptor outer segment. Its function is as follows. Involved in the maintenance of both rod and cone photoreceptor cells. Required for photoreceptor-specific localization of proximal connecting cilium (CC) proteins RPGR, AHI1, NPHP1, NPHP4, and RPGRIP1 at the distal CC, a photoreceptor-specific extension of the primary cilium transition zone. Maintenance of protein localization at the photoreceptor-specific distal CC is essential for normal microtubule stability and to prevent photoreceptor degeneration. The protein is Spermatogenesis-associated protein 7 homolog (Spata7) of Rattus norvegicus (Rat).